A 477-amino-acid chain; its full sequence is ATP synthase subunit beta (477 aa).

148–155 (GGAGVGKT) contacts ATP.

This sequence belongs to the ATPase alpha/beta chains family. As to quaternary structure, F-type ATPases have 2 components, CF(1) - the catalytic core - and CF(0) - the membrane proton channel. CF(1) has five subunits: alpha(3), beta(3), gamma(1), delta(1), epsilon(1). CF(0) has three main subunits: a(1), b(2) and c(9-12). The alpha and beta chains form an alternating ring which encloses part of the gamma chain. CF(1) is attached to CF(0) by a central stalk formed by the gamma and epsilon chains, while a peripheral stalk is formed by the delta and b chains.

The protein localises to the cell inner membrane. It catalyses the reaction ATP + H2O + 4 H(+)(in) = ADP + phosphate + 5 H(+)(out). Functionally, produces ATP from ADP in the presence of a proton gradient across the membrane. The catalytic sites are hosted primarily by the beta subunits. The polypeptide is ATP synthase subunit beta (Psychrobacter arcticus (strain DSM 17307 / VKM B-2377 / 273-4)).